Here is a 104-residue protein sequence, read N- to C-terminus: uncharacterized protein (104 aa).

This is an uncharacterized protein from Haemophilus influenzae (strain ATCC 51907 / DSM 11121 / KW20 / Rd).